The following is a 70-amino-acid chain: MNYIAAGIALCGSAIGAGIGNGMLMAKLIESIARQPELEGNLRTNMFISMALVEAMPIIVIAMSFVLINE.

2 consecutive transmembrane segments (helical) span residues 4 to 24 (IAAGIALCGSAIGAGIGNGML) and 48 to 68 (ISMALVEAMPIIVIAMSFVLI).

This sequence belongs to the ATPase C chain family. As to quaternary structure, F-type ATPases have 2 components, F(1) - the catalytic core - and F(0) - the membrane proton channel. F(1) has five subunits: alpha(3), beta(3), gamma(1), delta(1), epsilon(1). F(0) has three main subunits: a(1), b(2) and c(10-14). The alpha and beta chains form an alternating ring which encloses part of the gamma chain. F(1) is attached to F(0) by a central stalk formed by the gamma and epsilon chains, while a peripheral stalk is formed by the delta and b chains.

The protein resides in the cell membrane. F(1)F(0) ATP synthase produces ATP from ADP in the presence of a proton or sodium gradient. F-type ATPases consist of two structural domains, F(1) containing the extramembraneous catalytic core and F(0) containing the membrane proton channel, linked together by a central stalk and a peripheral stalk. During catalysis, ATP synthesis in the catalytic domain of F(1) is coupled via a rotary mechanism of the central stalk subunits to proton translocation. Functionally, key component of the F(0) channel; it plays a direct role in translocation across the membrane. A homomeric c-ring of between 10-14 subunits forms the central stalk rotor element with the F(1) delta and epsilon subunits. The sequence is that of ATP synthase subunit c from Oenococcus oeni (strain ATCC BAA-331 / PSU-1).